Consider the following 524-residue polypeptide: Peptide chain release factor 3 (524 aa).

One can recognise a tr-type G domain in the interval 10–278 (DSRRTFAIIS…TFLQFAPAPH (269 aa)). GTP contacts are provided by residues 19-26 (SHPDAGKT), 87-91 (DTPGH), and 141-144 (NKLD).

This sequence belongs to the TRAFAC class translation factor GTPase superfamily. Classic translation factor GTPase family. PrfC subfamily.

It is found in the cytoplasm. Its function is as follows. Increases the formation of ribosomal termination complexes and stimulates activities of RF-1 and RF-2. It binds guanine nucleotides and has strong preference for UGA stop codons. It may interact directly with the ribosome. The stimulation of RF-1 and RF-2 is significantly reduced by GTP and GDP, but not by GMP. The protein is Peptide chain release factor 3 of Enterococcus faecalis (strain ATCC 700802 / V583).